The primary structure comprises 132 residues: Small ribosomal subunit protein uS19 (132 aa).

Belongs to the universal ribosomal protein uS19 family.

Functionally, protein S19 forms a complex with S13 that binds strongly to the 16S ribosomal RNA. This Pyrococcus horikoshii (strain ATCC 700860 / DSM 12428 / JCM 9974 / NBRC 100139 / OT-3) protein is Small ribosomal subunit protein uS19 (rps19).